The chain runs to 362 residues: MGKIHRPRKGSLAFSPRKRAKSIVPRIRSWPKETEVRMLGFAGYKAGMTHILMIDDEPGLTNGKEIFMPVTIIETPPLRVFGIRAYRQGYLGLETAGEVIVPDFELDNYTPSKKGKGRKFTFYQFLGRRIATLPKDYTQEEFEQKLGALEDMIKEGEIVEVRALVSTQPWVIKLKKKPEVMEYAIGGTSVEEKFNYIKEKLGKEIRVGEVLKEGELLDVIAVTKGKGTQGPVKRWGIKLRAHKDSKGRRKVGSIGPWHPARVMWTVPMAGQMGFHHRTELNKRLIAIGENGKLVIDGNEIEITPKGGFPHYGIVRGDFMMIAGSVPGAIKRIIRVRPAIRPPKKKPPVQRPQITYVSVESKQ.

A disordered region spans residues 340–362; sequence RPPKKKPPVQRPQITYVSVESKQ. Over residues 351–362 the composition is skewed to polar residues; it reads PQITYVSVESKQ.

It belongs to the universal ribosomal protein uL3 family. In terms of assembly, part of the 50S ribosomal subunit. Forms a cluster with proteins L14 and L24e.

Its function is as follows. One of the primary rRNA binding proteins, it binds directly near the 3'-end of the 23S rRNA, where it nucleates assembly of the 50S subunit. This Pyrococcus horikoshii (strain ATCC 700860 / DSM 12428 / JCM 9974 / NBRC 100139 / OT-3) protein is Large ribosomal subunit protein uL3.